The primary structure comprises 641 residues: Chaperone protein DnaK (641 aa).

Threonine 198 is subject to Phosphothreonine; by autocatalysis. Basic and acidic residues-rich tracts occupy residues 514 to 529 (AEAN…EGVE), 540 to 554 (SSEK…KVSE), and 608 to 621 (AHAD…RSGD). Disordered stretches follow at residues 514 to 554 (AEAN…KVSE) and 604 to 641 (QTES…KRSA). Acidic residues predominate over residues 622–633 (DVVDADYEEVKD).

Belongs to the heat shock protein 70 family.

Its function is as follows. Acts as a chaperone. The chain is Chaperone protein DnaK from Sinorhizobium medicae (strain WSM419) (Ensifer medicae).